Here is a 443-residue protein sequence, read N- to C-terminus: Tubulin beta chain (443 aa).

The GTP site is built by glutamine 11, glutamate 69, serine 138, glycine 142, threonine 143, glycine 144, asparagine 204, and asparagine 226. Glutamate 69 serves as a coordination point for Mg(2+). Positions 421–443 are disordered; sequence EYQQYQDASAEEEGEFGEEEEEN. Over residues 429-443 the composition is skewed to acidic residues; the sequence is SAEEEGEFGEEEEEN.

It belongs to the tubulin family. In terms of assembly, dimer of alpha and beta chains. A typical microtubule is a hollow water-filled tube with an outer diameter of 25 nm and an inner diameter of 15 nM. Alpha-beta heterodimers associate head-to-tail to form protofilaments running lengthwise along the microtubule wall with the beta-tubulin subunit facing the microtubule plus end conferring a structural polarity. Microtubules usually have 13 protofilaments but different protofilament numbers can be found in some organisms and specialized cells. Mg(2+) serves as cofactor.

Its subcellular location is the cytoplasm. The protein resides in the cytoskeleton. Its function is as follows. Tubulin is the major constituent of microtubules, a cylinder consisting of laterally associated linear protofilaments composed of alpha- and beta-tubulin heterodimers. Microtubules grow by the addition of GTP-tubulin dimers to the microtubule end, where a stabilizing cap forms. Below the cap, tubulin dimers are in GDP-bound state, owing to GTPase activity of alpha-tubulin. This chain is Tubulin beta chain (TUBB1), found in Polytomella agilis (Quadriflagellate alga).